The sequence spans 50 residues: Large ribosomal subunit protein bL33B (50 aa).

It belongs to the bacterial ribosomal protein bL33 family.

This Ligilactobacillus salivarius (strain UCC118) (Lactobacillus salivarius) protein is Large ribosomal subunit protein bL33B.